Reading from the N-terminus, the 568-residue chain is Protein downstream neighbor of son homolog (568 aa).

2 disordered regions span residues 28–48 (NKLA…QVDE) and 311–355 (MPLK…DDDE). Over residues 315–335 (SDNSGNAHDNSFNEESTTTSL) the composition is skewed to polar residues.

It belongs to the DONSON family. In terms of tissue distribution, expression peaks during late G1 and S phase (at protein level).

It is found in the nucleus. In terms of biological role, essential for DNA amplification in the ovary and required for cell proliferation during development. In Drosophila melanogaster (Fruit fly), this protein is Protein downstream neighbor of son homolog (hd).